The sequence spans 956 residues: Isoleucine--tRNA ligase (956 aa).

Residues 60 to 70 carry the 'HIGH' region motif; it reads PYANGHIHVGH. L-isoleucyl-5'-AMP is bound at residue Glu583. Positions 624–628 match the 'KMSKS' region motif; the sequence is KMSKS. Residue Lys627 participates in ATP binding. The Zn(2+) site is built by Cys921, Cys924, Cys938, and Cys941.

This sequence belongs to the class-I aminoacyl-tRNA synthetase family. IleS type 1 subfamily. As to quaternary structure, monomer. Zn(2+) is required as a cofactor.

The protein resides in the cytoplasm. The catalysed reaction is tRNA(Ile) + L-isoleucine + ATP = L-isoleucyl-tRNA(Ile) + AMP + diphosphate. Its function is as follows. Catalyzes the attachment of isoleucine to tRNA(Ile). As IleRS can inadvertently accommodate and process structurally similar amino acids such as valine, to avoid such errors it has two additional distinct tRNA(Ile)-dependent editing activities. One activity is designated as 'pretransfer' editing and involves the hydrolysis of activated Val-AMP. The other activity is designated 'posttransfer' editing and involves deacylation of mischarged Val-tRNA(Ile). This chain is Isoleucine--tRNA ligase, found in Aquifex aeolicus (strain VF5).